A 186-amino-acid chain; its full sequence is Elongation factor P (186 aa).

Belongs to the elongation factor P family.

It localises to the cytoplasm. Its pathway is protein biosynthesis; polypeptide chain elongation. Its function is as follows. Involved in peptide bond synthesis. Stimulates efficient translation and peptide-bond synthesis on native or reconstituted 70S ribosomes in vitro. Probably functions indirectly by altering the affinity of the ribosome for aminoacyl-tRNA, thus increasing their reactivity as acceptors for peptidyl transferase. The chain is Elongation factor P from Prochlorococcus marinus (strain MIT 9313).